The chain runs to 349 residues: MDSTPHRKSDHIRIVLEEDVVGKGISTGFERLMLEHCALPAVDLDAVDLGLTLWGKSLTYPWLISSMTGGTPEAKQINLFLAEVAQALGIAMGLGSQRAAIENPDLAFTYQVRSVAPDILLFANLGLVQLNYGYGLEQAQRAVDMIEADALILHLNPLQEAVQPDGDRLWSGLWSKLEALVEALEVPVIVKEVGNGISGPVAKRLQECGVGAIDVAGAGGTSWSEVEAHRQTDRQAKEVAHNFADWGLPTAWSLQQVVQNTEQILVFASGGIRSGIDGAKAIALGATLVGSAAPVLAEAKINAQRVYDHYQARLRELQIAAFCCDAANLTQLAQVPLWDRQSGQRLTKP.

Residue arginine 7–lysine 8 participates in substrate binding. FMN is bound by residues serine 65, serine 66–threonine 68, serine 96, and asparagine 124. Serine 96–arginine 98 contacts substrate. Residue glutamine 159 participates in substrate binding. Position 160 (glutamate 160) interacts with Mg(2+). FMN contacts are provided by residues lysine 191, threonine 221, glycine 271–arginine 273, and alanine 292–alanine 293.

This sequence belongs to the IPP isomerase type 2 family. As to quaternary structure, homooctamer. Dimer of tetramers. The cofactor is FMN. It depends on NADPH as a cofactor. Mg(2+) serves as cofactor.

Its subcellular location is the cytoplasm. It carries out the reaction isopentenyl diphosphate = dimethylallyl diphosphate. In terms of biological role, involved in the biosynthesis of isoprenoids. Catalyzes the 1,3-allylic rearrangement of the homoallylic substrate isopentenyl (IPP) to its allylic isomer, dimethylallyl diphosphate (DMAPP). The polypeptide is Isopentenyl-diphosphate delta-isomerase (Synechocystis sp. (strain ATCC 27184 / PCC 6803 / Kazusa)).